The following is a 209-amino-acid chain: NAD(P)H dehydrogenase (quinone) (209 aa).

The 196-residue stretch at 4-199 (VNIIFYSMYG…AMARYQGRHV (196 aa)) folds into the Flavodoxin-like domain. FMN-binding positions include 10–15 (SMYGHV) and 87–89 (TRY). Residue Tyr-12 coordinates NAD(+). Trp-107 serves as a coordination point for substrate. FMN contacts are provided by residues 122–128 (SSGTQHG) and His-143.

This sequence belongs to the WrbA family. FMN serves as cofactor.

It carries out the reaction a quinone + NADH + H(+) = a quinol + NAD(+). The enzyme catalyses a quinone + NADPH + H(+) = a quinol + NADP(+). The sequence is that of NAD(P)H dehydrogenase (quinone) from Methanosarcina acetivorans (strain ATCC 35395 / DSM 2834 / JCM 12185 / C2A).